The primary structure comprises 190 residues: Elongation factor P-like protein (190 aa).

Belongs to the elongation factor P family.

This is Elongation factor P-like protein from Shigella boydii serotype 4 (strain Sb227).